The primary structure comprises 379 residues: Carbamoyl phosphate synthase small chain (379 aa).

The segment at 1-184 (MVSLYLENGL…LDYKPFDEKN (184 aa)) is CPSase. L-glutamine contacts are provided by serine 44, glycine 240, and glycine 242. The region spanning 188–378 (TIAVLDFGAK…VKLLENFPTR (191 aa)) is the Glutamine amidotransferase type-1 domain. Residue cysteine 268 is the Nucleophile of the active site. L-glutamine contacts are provided by leucine 269, glutamine 272, asparagine 310, and tyrosine 313. Active-site residues include histidine 351 and glutamate 353.

It belongs to the CarA family. As to quaternary structure, composed of two chains; the small (or glutamine) chain promotes the hydrolysis of glutamine to ammonia, which is used by the large (or ammonia) chain to synthesize carbamoyl phosphate. Tetramer of heterodimers (alpha,beta)4.

The catalysed reaction is hydrogencarbonate + L-glutamine + 2 ATP + H2O = carbamoyl phosphate + L-glutamate + 2 ADP + phosphate + 2 H(+). It carries out the reaction L-glutamine + H2O = L-glutamate + NH4(+). The protein operates within amino-acid biosynthesis; L-arginine biosynthesis; carbamoyl phosphate from bicarbonate: step 1/1. It functions in the pathway pyrimidine metabolism; UMP biosynthesis via de novo pathway; (S)-dihydroorotate from bicarbonate: step 1/3. Functionally, small subunit of the glutamine-dependent carbamoyl phosphate synthetase (CPSase). CPSase catalyzes the formation of carbamoyl phosphate from the ammonia moiety of glutamine, carbonate, and phosphate donated by ATP, constituting the first step of 2 biosynthetic pathways, one leading to arginine and/or urea and the other to pyrimidine nucleotides. The small subunit (glutamine amidotransferase) binds and cleaves glutamine to supply the large subunit with the substrate ammonia. The chain is Carbamoyl phosphate synthase small chain from Helicobacter acinonychis (strain Sheeba).